Consider the following 66-residue polypeptide: Surface composition regulator (66 aa).

The protein belongs to the GlgS family.

Its function is as follows. Major determinant of cell surface composition. Negatively regulates motility, adhesion and synthesis of biofilm exopolysaccharides. This chain is Surface composition regulator, found in Shigella flexneri.